The following is a 246-amino-acid chain: Phosphonates import ATP-binding protein PhnC (246 aa).

An ABC transporter domain is found at 2-246; that stretch reads IKFENVSKVY…ILDEVYRKEG (245 aa). Residue 35 to 42 participates in ATP binding; it reads GTSGAGKS.

Belongs to the ABC transporter superfamily. Phosphonates importer (TC 3.A.1.9.1) family. In terms of assembly, the complex is composed of two ATP-binding proteins (PhnC), two transmembrane proteins (PhnE) and a solute-binding protein (PhnD).

The protein localises to the cell membrane. It catalyses the reaction phosphonate(out) + ATP + H2O = phosphonate(in) + ADP + phosphate + H(+). Functionally, part of the ABC transporter complex PhnCDE involved in phosphonates import. Responsible for energy coupling to the transport system. This Lactococcus lactis subsp. cremoris (strain SK11) protein is Phosphonates import ATP-binding protein PhnC.